A 187-amino-acid chain; its full sequence is POM121 and ZP3 fusion protein (187 aa).

The disordered stretch occupies residues 166–187; the sequence is GTPSHSRRQPRVVSQWSTSASL. Polar residues predominate over residues 177 to 187; the sequence is VVSQWSTSASL.

As to expression, expressed in spleen, thymus, pancreas, testis, ovary, small intestine, colon and lymphocytes.

This Homo sapiens (Human) protein is POM121 and ZP3 fusion protein (POMZP3).